Here is an 89-residue protein sequence, read N- to C-terminus: Small ribosomal subunit protein uS15 (89 aa).

Belongs to the universal ribosomal protein uS15 family. As to quaternary structure, part of the 30S ribosomal subunit. Forms a bridge to the 50S subunit in the 70S ribosome, contacting the 23S rRNA.

One of the primary rRNA binding proteins, it binds directly to 16S rRNA where it helps nucleate assembly of the platform of the 30S subunit by binding and bridging several RNA helices of the 16S rRNA. In terms of biological role, forms an intersubunit bridge (bridge B4) with the 23S rRNA of the 50S subunit in the ribosome. This Paracoccus denitrificans (strain Pd 1222) protein is Small ribosomal subunit protein uS15.